A 314-amino-acid chain; its full sequence is Nodulation protein D 1 (314 aa).

The region spanning 6-63 is the HTH lysR-type domain; it reads LDLNLLVALDALMTERNLTAAARQINLSQPAMSAAIARLRSYFRDELFTMRGRELVPT. Positions 23 to 42 form a DNA-binding region, H-T-H motif; it reads LTAAARQINLSQPAMSAAIA.

It belongs to the LysR transcriptional regulatory family.

In terms of biological role, nodD regulates the expression of the nodABCFE genes which encode other nodulation proteins. NodD is also a negative regulator of its own expression. Binds flavonoids as inducers. The polypeptide is Nodulation protein D 1 (nodD1) (Bradyrhizobium elkanii).